The sequence spans 431 residues: Glucose-1-phosphate adenylyltransferase (431 aa).

Beta-D-fructose 1,6-bisphosphate is bound at residue K39. The AMP site is built by R40, H46, and R52. Y114 is an alpha-D-glucose 1-phosphate binding site. R130 lines the AMP pocket. Residues G179, 194 to 195 (EK), and S212 contribute to the alpha-D-glucose 1-phosphate site. Residues E370 and R386 each contribute to the AMP site. Residues 419-423 (REMLR) and 429-431 (QER) each bind beta-D-fructose 1,6-bisphosphate.

This sequence belongs to the bacterial/plant glucose-1-phosphate adenylyltransferase family. As to quaternary structure, homotetramer.

It catalyses the reaction alpha-D-glucose 1-phosphate + ATP + H(+) = ADP-alpha-D-glucose + diphosphate. It participates in glycan biosynthesis; glycogen biosynthesis. With respect to regulation, allosterically activated by fructose-1,6-bisphosphate (F16BP) and inhibited by AMP. In terms of biological role, involved in the biosynthesis of ADP-glucose, a building block required for the elongation reactions to produce glycogen. Catalyzes the reaction between ATP and alpha-D-glucose 1-phosphate (G1P) to produce pyrophosphate and ADP-Glc. The sequence is that of Glucose-1-phosphate adenylyltransferase from Salmonella paratyphi C (strain RKS4594).